A 49-amino-acid chain; its full sequence is Large ribosomal subunit protein bL33 (49 aa).

This sequence belongs to the bacterial ribosomal protein bL33 family.

The sequence is that of Large ribosomal subunit protein bL33 from Clostridium beijerinckii (strain ATCC 51743 / NCIMB 8052) (Clostridium acetobutylicum).